Here is a 1610-residue protein sequence, read N- to C-terminus: Adenylate cyclase type 10 (1610 aa).

Guanylate cyclase domains are found at residues 42–179 (VLMF…RLAQ) and 293–418 (TIVF…ARMM). The Mg(2+) site is built by D47 and I48. An ATP-binding site is contributed by 47-52 (DISGFT). K95 serves as a coordination point for hydrogencarbonate. A Mg(2+)-binding site is contributed by D99. 2 residues coordinate ATP: D99 and K144. The hydrogencarbonate site is built by V167, R176, and M337. Residues V406 and 412–416 (NLAAR) contribute to the ATP site.

Belongs to the adenylyl cyclase class-4/guanylyl cyclase family. It depends on Mg(2+) as a cofactor. Requires Mn(2+) as cofactor. Cleavage may occur to generate the active 48 kDa form. Detected in airway epithelial cells and testis (at protein level). Weakly expressed in multiple tissues. Expressed in brain, heart, kidney, liver, lung, pancreas, peripheral blood leukocytes, placenta, skeletal muscle, stomach, thymus, airway epithelial cells, duodenum, jejunum and ileum. Very low level of expression in bone.

Its subcellular location is the cell membrane. The protein localises to the cytoplasm. It localises to the cytoskeleton. It is found in the perinuclear region. The protein resides in the nucleus. Its subcellular location is the cell projection. The protein localises to the cilium. It localises to the mitochondrion. The enzyme catalyses ATP = 3',5'-cyclic AMP + diphosphate. Its activity is regulated as follows. Activated by manganese or magnesium ions. In the presence of magnesium ions, the enzyme is activated by bicarbonate. In the presence of manganese ions, the enzyme is inhibited by bicarbonate. In the absence of magnesium and bicarbonate, the enzyme is weakly activated by calcium. Calcium mildly increases the enzyme activity, also in the presence of magnesium ions. In terms of biological role, catalyzes the formation of the signaling molecule cAMP. May function as sensor that mediates responses to changes in cellular bicarbonate and CO(2) levels. Has a critical role in mammalian spermatogenesis by producing the cAMP which regulates cAMP-responsive nuclear factors indispensable for sperm maturation in the epididymis. Induces capacitation, the maturational process that sperm undergo prior to fertilization. Involved in ciliary beat regulation. This chain is Adenylate cyclase type 10 (ADCY10), found in Homo sapiens (Human).